The sequence spans 472 residues: Argininosuccinate lyase (472 aa).

The protein belongs to the lyase 1 family. Argininosuccinate lyase subfamily.

The protein resides in the cytoplasm. The enzyme catalyses 2-(N(omega)-L-arginino)succinate = fumarate + L-arginine. It participates in amino-acid biosynthesis; L-arginine biosynthesis; L-arginine from L-ornithine and carbamoyl phosphate: step 3/3. This is Argininosuccinate lyase from Rhodococcus jostii (strain RHA1).